The chain runs to 451 residues: Tubulin beta-1 chain (451 aa).

Positions 1–4 (MREI) match the MREI motif motif. GTP is bound by residues glutamine 11, glutamate 69, serine 138, glycine 142, threonine 143, and glycine 144. Residue glutamate 69 participates in Mg(2+) binding. Serine 172 bears the Phosphoserine; by CDK1 mark. GTP is bound by residues asparagine 204 and asparagine 226. The segment at 430 to 451 (AGLEDSEEDVEEAEVEAEDKDH) is disordered. Residues 433–451 (EDSEEDVEEAEVEAEDKDH) are compositionally biased toward acidic residues. The residue at position 435 (serine 435) is a Phosphoserine. 5-glutamyl polyglutamate is present on glutamate 440.

This sequence belongs to the tubulin family. As to quaternary structure, dimer of alpha and beta chains. A typical microtubule is a hollow water-filled tube with an outer diameter of 25 nm and an inner diameter of 15 nM. Alpha-beta heterodimers associate head-to-tail to form protofilaments running lengthwise along the microtubule wall with the beta-tubulin subunit facing the microtubule plus end conferring a structural polarity. Microtubules usually have 13 protofilaments but different protofilament numbers can be found in some organisms and specialized cells. Interacts with RANBP10. Mg(2+) is required as a cofactor. Post-translationally, some glutamate residues at the C-terminus are polyglycylated, resulting in polyglycine chains on the gamma-carboxyl group. Glycylation is mainly limited to tubulin incorporated into axonemes (cilia and flagella) whereas glutamylation is prevalent in neuronal cells, centrioles, axonemes, and the mitotic spindle. Both modifications can coexist on the same protein on adjacent residues, and lowering polyglycylation levels increases polyglutamylation, and reciprocally. Cilia and flagella glycylation is required for their stability and maintenance. Flagella glycylation controls sperm motility. Some glutamate residues at the C-terminus are polyglutamylated, resulting in polyglutamate chains on the gamma-carboxyl group. Polyglutamylation plays a key role in microtubule severing by spastin (SPAST). SPAST preferentially recognizes and acts on microtubules decorated with short polyglutamate tails: severing activity by SPAST increases as the number of glutamates per tubulin rises from one to eight, but decreases beyond this glutamylation threshold. Glutamylation is also involved in cilia motility. In terms of processing, phosphorylated on Ser-172 by CDK1 during the cell cycle, from metaphase to telophase, but not in interphase. This phosphorylation inhibits tubulin incorporation into microtubules.

The protein resides in the cytoplasm. Its subcellular location is the cytoskeleton. Functionally, tubulin is the major constituent of microtubules, a cylinder consisting of laterally associated linear protofilaments composed of alpha- and beta-tubulin heterodimers. Microtubules grow by the addition of GTP-tubulin dimers to the microtubule end, where a stabilizing cap forms. Below the cap, tubulin dimers are in GDP-bound state, owing to GTPase activity of alpha-tubulin. The chain is Tubulin beta-1 chain (Tubb1) from Mus musculus (Mouse).